The following is a 232-amino-acid chain: MSNVDRAEIAKFEALAHRWWDRESEFKPLHEINPLRVNWIDERASLAGKKVLDVGCGGGILSEAMALRGATVTGIDMGEAPLAVAQLHQLESGVQVEYRQITAEALAEEMPEQFDVVTCLEMLEHVPDPSSVIRACYRMVKPGGQVFFSTINRNPKAYLLAIVGAEYILKMLPRGTHDFKKFIRPSELGAWSRDAGLQVKDIIGLTYNPLTKHYKLNSDVDVNYMIQTLREE.

S-adenosyl-L-methionine is bound by residues Arg36, Gly55, Asp76, and Leu120.

It belongs to the methyltransferase superfamily. UbiG/COQ3 family.

The catalysed reaction is a 3-demethylubiquinol + S-adenosyl-L-methionine = a ubiquinol + S-adenosyl-L-homocysteine + H(+). The enzyme catalyses a 3-(all-trans-polyprenyl)benzene-1,2-diol + S-adenosyl-L-methionine = a 2-methoxy-6-(all-trans-polyprenyl)phenol + S-adenosyl-L-homocysteine + H(+). It functions in the pathway cofactor biosynthesis; ubiquinone biosynthesis. O-methyltransferase that catalyzes the 2 O-methylation steps in the ubiquinone biosynthetic pathway. The protein is Ubiquinone biosynthesis O-methyltransferase of Pseudomonas putida (strain GB-1).